The chain runs to 440 residues: ATP-dependent protease ATPase subunit HslU (440 aa).

ATP contacts are provided by residues Ile-18 and Gly-60–Glu-65. Positions Arg-138–Leu-159 are disordered. ATP-binding residues include Asp-252, Glu-318, and Arg-390.

The protein belongs to the ClpX chaperone family. HslU subfamily. In terms of assembly, a double ring-shaped homohexamer of HslV is capped on each side by a ring-shaped HslU homohexamer. The assembly of the HslU/HslV complex is dependent on binding of ATP.

The protein resides in the cytoplasm. ATPase subunit of a proteasome-like degradation complex; this subunit has chaperone activity. The binding of ATP and its subsequent hydrolysis by HslU are essential for unfolding of protein substrates subsequently hydrolyzed by HslV. HslU recognizes the N-terminal part of its protein substrates and unfolds these before they are guided to HslV for hydrolysis. The polypeptide is ATP-dependent protease ATPase subunit HslU (Alkalilimnicola ehrlichii (strain ATCC BAA-1101 / DSM 17681 / MLHE-1)).